Consider the following 227-residue polypeptide: CDP-diacylglycerol--inositol 3-phosphatidyltransferase 1 (227 aa).

A run of 2 helical transmembrane segments spans residues 12–36 (LSVY…AFAV) and 42–61 (PLFS…DGWV). Asp55 and Asp58 together coordinate Mg(2+). The a CDP-1,2-diacyl-sn-glycerol site is built by Gly59, Arg63, and Ser69. 4 consecutive transmembrane segments (helical) span residues 73-95 (AVLD…SQIY), 101-122 (FLSL…TFLA), 142-165 (YGNR…LLLI), and 177-200 (VVAT…GWSM). Positions 76 and 80 each coordinate Mg(2+). The Proton acceptor role is filled by Asp80.

This sequence belongs to the CDP-alcohol phosphatidyltransferase class-I family. It depends on Mg(2+) as a cofactor. Mn(2+) is required as a cofactor. Expressed in stems, flowers, shoots and roots. Present in epidermal tissues.

The protein localises to the membrane. The enzyme catalyses a CDP-1,2-diacyl-sn-glycerol + myo-inositol = a 1,2-diacyl-sn-glycero-3-phospho-(1D-myo-inositol) + CMP + H(+). Its function is as follows. Catalyzes the biosynthesis of phosphatidylinositol (PtdIns) as well as PtdIns:inositol exchange reaction. May thus act to reduce an excessive cellular PtdIns content. The exchange activity is due to the reverse reaction of PtdIns synthase and is dependent on CMP, which is tightly bound to the enzyme. The chain is CDP-diacylglycerol--inositol 3-phosphatidyltransferase 1 (PIS1) from Arabidopsis thaliana (Mouse-ear cress).